The sequence spans 366 residues: Peptide chain release factor 2 (366 aa).

Position 251 is an N5-methylglutamine (Gln251).

This sequence belongs to the prokaryotic/mitochondrial release factor family. In terms of processing, methylated by PrmC. Methylation increases the termination efficiency of RF2.

It localises to the cytoplasm. Its function is as follows. Peptide chain release factor 2 directs the termination of translation in response to the peptide chain termination codons UGA and UAA. The protein is Peptide chain release factor 2 of Campylobacter concisus (strain 13826).